The primary structure comprises 695 residues: MTFLLVSLLAFLSLGSGCHHRICHCWHRVFLCQESKVTEIPSDLPRNAVELRFVLTKLRVIPKGAFSGFGDLEKIEISQNDVLEVIEANVFFNLSKLHEIRIEKANNLLYIDTDAFQNLPNLRYLLISNTGIKHFPAVHKIQSLQKVLLDIQDNINIHTVERNSFMGLSFESMILWLNKNGIQEIHNCAFNGTQLDELNLSDNINLEELPNDVFQGASGPVILDISRTRIHSLPSYGLENIKKLRAKSTYNLKKLPSLDKFVALMEASLTYPSHCCAFANWRRPISELHPICNKSILRQEVDDMTQARGQRVSLAEDEESSYTKGFDMMYSEFDYDLCNEVVDVTCSPKPDAFNPCEDIMGYDILRVLIWFISILAITGNIIVLMILITSQYKLTVPRFLMCNLAFADLCIGIYLLLIASVDIYTKSQYHNYAIDWQTGAGCDAAGFFTVFASELSVYTLTVITLERWHTITHAMQLECKVQLRHAAIIMLLGWIFAFMVALFPIFGISSYMKVSICLPMDIDSPLSQLYVMSLLVLNVLAFVVICCCYAHIYLTVRNPNIVSSSSDTKIAKRMAMLIFTDFLCMAPISFFAISASLKVPLITVSKSKILLVLFYPINSCANPFLYAIFTKNFRRDFFILLSKFGCYEVQAQTYRSETSSTAHNFHPRNGHCPPAPRVTNSSNYILIPLRHLAKN.

Positions 1–17 (MTFLLVSLLAFLSLGSG) are cleaved as a signal peptide. Disulfide bonds link Cys-18–Cys-25 and Cys-23–Cys-32. The region spanning 18–46 (CHHRICHCWHRVFLCQESKVTEIPSDLPR) is the LRRNT domain. The Extracellular portion of the chain corresponds to 18–366 (CHHRICHCWH…EDIMGYDILR (349 aa)). 9 LRR repeats span residues 49 to 72 (VELRFVLTKLRVIPKGAFSGFGDL), 73 to 97 (EKIEISQNDVLEVIEANVFFNLSKL), 98 to 118 (HEIRIEKANNLLYIDTDAFQN), 119 to 143 (LPNLRYLLISNTGIKHFPAVHKIQS), 144 to 169 (LQKVLLDIQDNINIHTVERNSFMGLS), 170 to 192 (FESMILWLNKNGIQEIHNCAFNG), 193 to 216 (TQLDELNLSDNINLEELPNDVFQG), 217 to 240 (ASGPVILDISRTRIHSLPSYGLEN), and 241 to 259 (IKKLRAKSTYNLKKLPSLD). A glycan (N-linked (GlcNAc...) asparagine) is linked at Asn-93. Asn-191 and Asn-199 each carry an N-linked (GlcNAc...) asparagine glycan. 4 disulfides stabilise this stretch: Cys-275–Cys-346, Cys-276–Cys-292, Cys-276–Cys-356, and Cys-292–Cys-338. N-linked (GlcNAc...) asparagine glycosylation occurs at Asn-293. Tyr-335 carries the post-translational modification Sulfotyrosine. Residues 367 to 387 (VLIWFISILAITGNIIVLMIL) form a helical membrane-spanning segment. Topologically, residues 388–398 (ITSQYKLTVPR) are cytoplasmic. A helical membrane pass occupies residues 399 to 419 (FLMCNLAFADLCIGIYLLLIA). The Extracellular portion of the chain corresponds to 420-444 (SVDIYTKSQYHNYAIDWQTGAGCDA). The chain crosses the membrane as a helical span at residues 445–465 (AGFFTVFASELSVYTLTVITL). Residues 466-487 (ERWHTITHAMQLECKVQLRHAA) lie on the Cytoplasmic side of the membrane. The helical transmembrane segment at 488-508 (IIMLLGWIFAFMVALFPIFGI) threads the bilayer. The Extracellular portion of the chain corresponds to 509 to 528 (SSYMKVSICLPMDIDSPLSQ). Residues 529–550 (LYVMSLLVLNVLAFVVICCCYA) traverse the membrane as a helical segment. At 551–573 (HIYLTVRNPNIVSSSSDTKIAKR) the chain is on the cytoplasmic side. The helical transmembrane segment at 574–594 (MAMLIFTDFLCMAPISFFAIS) threads the bilayer. Over 595–608 (ASLKVPLITVSKSK) the chain is Extracellular. A helical transmembrane segment spans residues 609–629 (ILLVLFYPINSCANPFLYAIF). Residues 630–695 (TKNFRRDFFI…LIPLRHLAKN (66 aa)) are Cytoplasmic-facing.

This sequence belongs to the G-protein coupled receptor 1 family. FSH/LSH/TSH subfamily. In terms of assembly, homotrimer. Functions as a homotrimer binding the FSH hormone heterodimer composed of CGA and FSHB. Interacts with ARRB2. Interacts with APPL2; interaction is independent of follicle stimulating hormone stimulation. In terms of processing, N-glycosylated; indirectly required for FSH-binding, possibly via a conformational change that allows high affinity binding of hormone. Post-translationally, sulfated.

It is found in the cell membrane. Its function is as follows. G protein-coupled receptor for follitropin, the follicle-stimulating hormone. Through cAMP production activates the downstream PI3K-AKT and ERK1/ERK2 signaling pathways. This Felis catus (Cat) protein is Follicle-stimulating hormone receptor (FSHR).